Reading from the N-terminus, the 2188-residue chain is Tiggrin (2188 aa).

Positions 1 to 18 are cleaved as a signal peptide; sequence MRALGGITLLLAVAICQG. Coiled-coil stretches lie at residues 570–635, 1009–1050, 1312–1343, and 1613–1641; these read SRLE…EHIK, LKNL…EIES, TFVE…EIEE, and KQQR…AQYH. The tract at residues 1984–2188 is disordered; that stretch reads IFSKDRGDQP…FWEKLKEKLG (205 aa). Over residues 1985–1998 the composition is skewed to basic and acidic residues; sequence FSKDRGDQPPHTYD. The Cell attachment site motif lies at 1989 to 1991; the sequence is RGD. The span at 2000 to 2009 shows a compositional bias: acidic residues; it reads SFVEGDEPGL. Pro residues predominate over residues 2016 to 2033; the sequence is PRPPNPAPIVSTPKPPLP. Composition is skewed to low complexity over residues 2057–2077 and 2091–2101; these read GSAS…ASAS and QQEVDLGQQQQ. The span at 2115–2139 shows a compositional bias: polar residues; sequence GQQTQVEDTDWNQQAEDLGQQQQVQ. The span at 2148–2165 shows a compositional bias: low complexity; the sequence is QTQGHSSSSNSRSQPLQQ. Over residues 2179 to 2188 the composition is skewed to basic and acidic residues; sequence FWEKLKEKLG.

O-glycosylation by pgant3 is required for proper secretion and localization to the basal cell layer interface during wing development. In embryos, expressed in the apodemes (muscle attachment sites) of the major longitudinal muscles 4, 6, 7, 12 and 13 and the wide dorsal oblique muscles 9 and 10, in hemocytes, in fat body cells, in basement membranes surrounding the gut and in the commissures of the ventral nerve cord. Expressed in larval imaginal wing disk and in pupal wing. In adult flies, expressed in the jump muscle (at protein level).

Its subcellular location is the secreted. The protein resides in the extracellular space. It is found in the extracellular matrix. Functionally, functions as a ligand for integrin alpha-PS2/beta-PS. Required in larvae for proper muscle structure and function. Involved in the regulation of cell adhesion during wing development. The sequence is that of Tiggrin from Drosophila melanogaster (Fruit fly).